The primary structure comprises 157 residues: Deoxyuridine 5'-triphosphate nucleotidohydrolase (157 aa).

Residues Ser63, Gly76, Asp79, Tyr82, Lys87, Arg132, Phe137, and Gly138 each contribute to the dUMP site. Residues 125 to 157 form a disordered region; the sequence is NDLESTERGAGGFGSTGINDEKKRKLDEAEAKE. Over residues 143-157 the composition is skewed to basic and acidic residues; it reads NDEKKRKLDEAEAKE.

Belongs to the dUTPase family. In terms of assembly, homotrimer. Mg(2+) is required as a cofactor.

It carries out the reaction dUTP + H2O = dUMP + diphosphate + H(+). Its pathway is pyrimidine metabolism; dUMP biosynthesis; dUMP from dCTP (dUTP route): step 2/2. Functionally, involved in nucleotide metabolism via production of dUMP, the immediate precursor of thymidine nucleotides, and decreases the intracellular concentration of dUTP so that uracil cannot be incorporated into DNA. This is Deoxyuridine 5'-triphosphate nucleotidohydrolase (DUT1) from Yarrowia lipolytica (strain CLIB 122 / E 150) (Yeast).